The following is a 355-amino-acid chain: Methionine import ATP-binding protein MetN (355 aa).

Residues 8-250 (LKNIDITFTQ…PQEDLTQEFI (243 aa)) form the ABC transporter domain. Residue 42–49 (GYSGAGKS) coordinates ATP.

This sequence belongs to the ABC transporter superfamily. Methionine importer (TC 3.A.1.24) family. The complex is composed of two ATP-binding proteins (MetN), two transmembrane proteins (MetI) and a solute-binding protein (MetQ).

The protein localises to the cell membrane. The enzyme catalyses L-methionine(out) + ATP + H2O = L-methionine(in) + ADP + phosphate + H(+). It catalyses the reaction D-methionine(out) + ATP + H2O = D-methionine(in) + ADP + phosphate + H(+). Functionally, part of the ABC transporter complex MetNIQ involved in methionine import. Responsible for energy coupling to the transport system. The sequence is that of Methionine import ATP-binding protein MetN from Streptococcus thermophilus (strain ATCC BAA-250 / LMG 18311).